Consider the following 115-residue polypeptide: MWDPLVHEFPETVHGFRCMLANKYLLAVESKYAPDTLGYELIRDCIGVVRSRNYEQATSRYRDIYTRLQGATEAELQQSVQERCCCPHCPRHKKADMGESAHVQKAHDVQAVQKP.

Belongs to the geminiviridae protein AV2/V2 family. As to quaternary structure, interacts with host SGS3.

The protein resides in the host cytoplasm. It localises to the host perinuclear region. In terms of biological role, through its interaction with host SGS3, acts as a suppressor of RNA-mediated gene silencing, also known as post-transcriptional gene silencing (PTGS), a mechanism of plant viral defense that limits the accumulation of viral RNAs. This chain is Protein V2, found in Cynanchum acutum (Little mallow).